Reading from the N-terminus, the 249-residue chain is Aspartate/glutamate leucyltransferase (249 aa).

It belongs to the R-transferase family. Bpt subfamily.

Its subcellular location is the cytoplasm. The catalysed reaction is N-terminal L-glutamyl-[protein] + L-leucyl-tRNA(Leu) = N-terminal L-leucyl-L-glutamyl-[protein] + tRNA(Leu) + H(+). The enzyme catalyses N-terminal L-aspartyl-[protein] + L-leucyl-tRNA(Leu) = N-terminal L-leucyl-L-aspartyl-[protein] + tRNA(Leu) + H(+). In terms of biological role, functions in the N-end rule pathway of protein degradation where it conjugates Leu from its aminoacyl-tRNA to the N-termini of proteins containing an N-terminal aspartate or glutamate. This Brucella abortus (strain S19) protein is Aspartate/glutamate leucyltransferase.